A 260-amino-acid polypeptide reads, in one-letter code: Ribosomal RNA small subunit methyltransferase G (260 aa).

S-adenosyl-L-methionine contacts are provided by residues glycine 94, phenylalanine 99, 117–119, 145–146, and arginine 164; these read DSS and AE.

This sequence belongs to the methyltransferase superfamily. RNA methyltransferase RsmG family.

It is found in the cytoplasm. In terms of biological role, specifically methylates the N7 position of a guanine in 16S rRNA. In Synechococcus sp. (strain JA-3-3Ab) (Cyanobacteria bacterium Yellowstone A-Prime), this protein is Ribosomal RNA small subunit methyltransferase G.